A 65-amino-acid polypeptide reads, in one-letter code: Large ribosomal subunit protein bL35 (65 aa).

Belongs to the bacterial ribosomal protein bL35 family.

This Heliobacterium modesticaldum (strain ATCC 51547 / Ice1) protein is Large ribosomal subunit protein bL35.